A 230-amino-acid polypeptide reads, in one-letter code: Uracil-DNA glycosylase (230 aa).

Catalysis depends on D70, which acts as the Proton acceptor.

It belongs to the uracil-DNA glycosylase (UDG) superfamily. UNG family.

The protein localises to the cytoplasm. The enzyme catalyses Hydrolyzes single-stranded DNA or mismatched double-stranded DNA and polynucleotides, releasing free uracil.. Its function is as follows. Excises uracil residues from the DNA which can arise as a result of misincorporation of dUMP residues by DNA polymerase or due to deamination of cytosine. This Pseudomonas fluorescens (strain SBW25) protein is Uracil-DNA glycosylase.